The primary structure comprises 691 residues: MGTVSSRRLWWPLPLLLLLLLLGPAGARAQEDDDGDYEELVLALRSEEDGLADALQHGATATFHRCAKEPWRLPGTYVVVLKEETHRSQPERTARRLQAQAARRGYLIKLLHVFHDLLPGFLVKMSRDLLELALKLPHVDYIEEDSSVFAQSIPWNLERITPARYRADEYQPPNGGSLVEVYLLDTSIQSGHREIEGRVMVTDFGSVPEEDGTRFHRQASKCDSHGTHLAGVVSGRDAGVAKGASLRSLRVLNCQGKGTVSSTLIGLEFIRKSQLVQPVGPLVVLLPLAGGYSRVLNAACQRLARAGVVLVAAAGNFRDDACLYSPASAPEVITVGATNAQDQPVTLGTLGTNFGRCVDLFAPGEDIIGASSDCSTCFVSRSGTSQAAAHVAGIAAVMLSAEPELTLAELRQRLIHFSAKDVINEAWFPEDQRVLTPNLVAALPPSTHGAGWQLFCRTVWSAHSGPTRMATAMARCAPDEELLSCSSFSSSGKRRGERIEAQGGRRVCLAHNAFGGKGVYAIARCCLLPQANCSIHTAPPAGASMGTRAHCHQQGHVLTGCSAHWEVEELGTHKPPVLRPGGQPSQCMGHSGASTHATCCHAPGLECKVKEHGLPAPQEQVTVACEEGWTLTGCSALPGTSHILGAYAVDDTCVVRSQDVSTTGSTSEEAVAAVAICCRSRHLAQASQELQ.

The signal sequence occupies residues 1-29; that stretch reads MGTVSSRRLWWPLPLLLLLLLLGPAGARA. The propeptide occupies 30–151; it reads QEDDDGDYEE…IEEDSSVFAQ (122 aa). Tyr-37 carries the post-translational modification Sulfotyrosine. Ser-46 is subject to Phosphoserine. Residues 76 to 148 enclose the Inhibitor I9 domain; the sequence is TYVVVLKEET…VDYIEEDSSV (73 aa). In terms of domain architecture, Peptidase S8 spans 154 to 460; that stretch reads PWNLERITPA…GWQLFCRTVW (307 aa). Residues Asp-185 and His-225 each act as charge relay system in the active site. 2 disulfides stabilise this stretch: Cys-222-Cys-254 and Cys-322-Cys-357. Ser-385 acts as the Charge relay system in catalysis. The interval 449-691 is C-terminal domain; it reads GAGWQLFCRT…HLAQASQELQ (243 aa). Intrachain disulfides connect Cys-456–Cys-526, Cys-476–Cys-525, and Cys-485–Cys-508. An N-linked (GlcNAc...) asparagine glycan is attached at Asn-532. 6 disulfides stabilise this stretch: Cys-533–Cys-600, Cys-551–Cys-599, Cys-561–Cys-587, Cys-607–Cys-678, Cys-625–Cys-677, and Cys-634–Cys-653. Ser-687 is subject to Phosphoserine.

Belongs to the peptidase S8 family. Monomer. Can self-associate to form dimers and higher multimers which may have increased LDLR degrading activity. The precursor protein but not the mature protein may form multimers. Interacts with APOB, VLDLR, LRP8/APOER2 and BACE1. The full-length immature form (pro-PCSK9) interacts with SCNN1A, SCNN1B and SCNN1G. The pro-PCSK9 form (via C-terminal domain) interacts with LDLR. Interacts (via the C-terminal domain) with ANXA2 (via repeat Annexin 1); the interaction inhibits the degradation of LDLR. Ca(2+) is required as a cofactor. Post-translationally, cleavage by furin and PCSK5 generates a truncated inactive protein that is unable to induce LDLR degradation. Undergoes autocatalytic cleavage in the endoplasmic reticulum to release the propeptide from the N-terminus and the cleavage of the propeptide is strictly required for its maturation and activation. The cleaved propeptide however remains associated with the catalytic domain through non-covalent interactions, preventing potential substrates from accessing its active site. As a result, it is secreted from cells as a propeptide-containing, enzymatically inactive protein. In terms of processing, phosphorylation protects the propeptide against proteolysis.

It is found in the cytoplasm. It localises to the secreted. The protein resides in the endosome. The protein localises to the lysosome. Its subcellular location is the cell surface. It is found in the endoplasmic reticulum. It localises to the golgi apparatus. With respect to regulation, its proteolytic activity is autoinhibited by the non-covalent binding of the propeptide to the catalytic domain. Inhibited by EGTA. Functionally, crucial player in the regulation of plasma cholesterol homeostasis. Binds to low-density lipid receptor family members: low density lipoprotein receptor (LDLR), very low density lipoprotein receptor (VLDLR), apolipoprotein E receptor (LRP1/APOER) and apolipoprotein receptor 2 (LRP8/APOER2), and promotes their degradation in intracellular acidic compartments. Acts via a non-proteolytic mechanism to enhance the degradation of the hepatic LDLR through a clathrin LDLRAP1/ARH-mediated pathway. May prevent the recycling of LDLR from endosomes to the cell surface or direct it to lysosomes for degradation. Can induce ubiquitination of LDLR leading to its subsequent degradation. Inhibits intracellular degradation of APOB via the autophagosome/lysosome pathway in a LDLR-independent manner. Involved in the disposal of non-acetylated intermediates of BACE1 in the early secretory pathway. Inhibits epithelial Na(+) channel (ENaC)-mediated Na(+) absorption by reducing ENaC surface expression primarily by increasing its proteasomal degradation. Regulates neuronal apoptosis via modulation of LRP8/APOER2 levels and related anti-apoptotic signaling pathways. In Saimiri boliviensis boliviensis (Bolivian squirrel monkey), this protein is Proprotein convertase subtilisin/kexin type 9 (PCSK9).